A 94-amino-acid chain; its full sequence is MNKYELTYILKSETDEEKRNQLAEKFKGIIEADGAVENVDEWGNRKLAYEIDKRNEGYYVLVNFASSIDVPKELDRNLKIAEQVIRHMIIRIQE.

The protein belongs to the bacterial ribosomal protein bS6 family.

Functionally, binds together with bS18 to 16S ribosomal RNA. The sequence is that of Small ribosomal subunit protein bS6 from Alkaliphilus metalliredigens (strain QYMF).